A 336-amino-acid polypeptide reads, in one-letter code: Ferrochelatase (336 aa).

Residues histidine 206 and glutamate 287 each contribute to the Fe cation site.

The protein belongs to the ferrochelatase family.

Its subcellular location is the cytoplasm. The catalysed reaction is heme b + 2 H(+) = protoporphyrin IX + Fe(2+). Its pathway is porphyrin-containing compound metabolism; protoheme biosynthesis; protoheme from protoporphyrin-IX: step 1/1. Catalyzes the ferrous insertion into protoporphyrin IX. This chain is Ferrochelatase, found in Neisseria meningitidis serogroup A / serotype 4A (strain DSM 15465 / Z2491).